Here is a 496-residue protein sequence, read N- to C-terminus: NADP-dependent glyceraldehyde-3-phosphate dehydrogenase (496 aa).

Substrate is bound by residues Arg-116 and 169–170 (NY). NADP(+)-binding residues include Lys-192, Thr-195, and Asp-230. 245–249 (GGDTG) lines the NAD(+) pocket. Glu-264 serves as the catalytic Proton acceptor. 297–299 (RCT) lines the substrate pocket. The Nucleophile role is filled by Cys-298. Glu-391 lines the NADP(+) pocket. Arg-451 contacts substrate.

This sequence belongs to the aldehyde dehydrogenase family.

It is found in the cytoplasm. The protein resides in the cytosol. The enzyme catalyses D-glyceraldehyde 3-phosphate + NADP(+) + H2O = (2R)-3-phosphoglycerate + NADPH + 2 H(+). Competitive inhibition by NADPH, 3-phospho-D-glycerate and ATP. In terms of biological role, important as a means of generating NADPH for biosynthetic reactions. May be a main source of cytosolic NADPH for mannitol biosynthesis in leaves. This Apium graveolens (Celery) protein is NADP-dependent glyceraldehyde-3-phosphate dehydrogenase.